Consider the following 120-residue polypeptide: Large ribosomal subunit protein bL20 (120 aa).

This sequence belongs to the bacterial ribosomal protein bL20 family.

Its function is as follows. Binds directly to 23S ribosomal RNA and is necessary for the in vitro assembly process of the 50S ribosomal subunit. It is not involved in the protein synthesizing functions of that subunit. This Desulforudis audaxviator (strain MP104C) protein is Large ribosomal subunit protein bL20.